Consider the following 250-residue polypeptide: 5'-nucleotidase SurE (250 aa).

A divalent metal cation contacts are provided by Asp-8, Asp-9, Ser-39, and Asn-95.

It belongs to the SurE nucleotidase family. It depends on a divalent metal cation as a cofactor.

The protein resides in the cytoplasm. It carries out the reaction a ribonucleoside 5'-phosphate + H2O = a ribonucleoside + phosphate. In terms of biological role, nucleotidase that shows phosphatase activity on nucleoside 5'-monophosphates. In Syntrophobacter fumaroxidans (strain DSM 10017 / MPOB), this protein is 5'-nucleotidase SurE.